The chain runs to 659 residues: DNA mismatch repair protein MutL (659 aa).

It belongs to the DNA mismatch repair MutL/HexB family.

Its function is as follows. This protein is involved in the repair of mismatches in DNA. It is required for dam-dependent methyl-directed DNA mismatch repair. May act as a 'molecular matchmaker', a protein that promotes the formation of a stable complex between two or more DNA-binding proteins in an ATP-dependent manner without itself being part of a final effector complex. The protein is DNA mismatch repair protein MutL of Ligilactobacillus salivarius (strain UCC118) (Lactobacillus salivarius).